A 466-amino-acid polypeptide reads, in one-letter code: Zinc metalloproteinase/disintegrin (466 aa).

Residues 1–6 (FPYQGS) form the signal peptide. Residues 7–174 (SIILESGNVN…PIKKASQLIV (168 aa)) constitute a propeptide that is removed on maturation. Residues 180–377 (RYMEIVIVVD…ENPPCILNKP (198 aa)) enclose the Peptidase M12B domain. Ca(2+) is bound by residues E183 and D267. 3 disulfide bridges follow: C291/C372, C331/C356, and C333/C339. H316 contacts Zn(2+). Residue E317 is part of the active site. H320 and H326 together coordinate Zn(2+). 2 residues coordinate Ca(2+): C372 and N375. Residues 377–401 (PLRTDTVSTPVSGNELLEAGKDYDR) constitute a propeptide that is removed on maturation. Positions 385 to 466 (TPVSGNELLE…GDCPRNPYHA (82 aa)) constitute a Disintegrin domain. 3 disulfide bridges follow: C422–C428, C427–C452, and C440–C459. A Cell attachment site motif is present at residues 444 to 446 (RGD).

This sequence belongs to the venom metalloproteinase (M12B) family. P-II subfamily. P-IIa sub-subfamily. Monomer. Zn(2+) serves as cofactor. As to expression, expressed by the venom gland.

It localises to the secreted. In terms of biological role, impairs hemostasis in the envenomed animal. Its function is as follows. Inhibits platelet aggregation induced by ADP, thrombin, platelet-activating factor and collagen. Acts by inhibiting fibrinogen interaction with platelet receptors GPIIb/GPIIIa (ITGA2B/ITGB3). The polypeptide is Zinc metalloproteinase/disintegrin (Deinagkistrodon acutus (Hundred-pace snake)).